A 314-amino-acid chain; its full sequence is MAATASPGAGRMDGKPRTSPKSVKFLFGGLAGMGATVFVQPLDLVXNRMQLSGEGAKTREYKTSFHALTSILKAEGLRGIYTGLSAGLLRQATYTTTRLGIYTVLFERLTGADGTPPGFLLKALIGMTAGATGAFVGPPAEVALIRMTADGRLPADQRRGYKNVFNALIRIAREEGVPTLWRGCIPTMARAVVVNAAQLASYSQSKQFLLDSGYFSDNILCHFCAIMISGLVTTAASMPVDIVKTRIQNMRMIDEKPEYKNGLDVLLKVVRYEGFFSLWKGFTPYYARLGPHTVLTFIFLEQMNKAYKRLFLSG.

A2 is modified (N-acetylalanine). Phosphoserine is present on S6. Solcar repeat units lie at residues 23–108 (VKFL…LFER), 117–208 (PGFL…SKQF), and 217–306 (DNIL…MNKA). The helical transmembrane segment at 24–42 (KFLFGGLAGMGATVFVQPL) threads the bilayer. The residue at position 57 (K57) is an N6-succinyllysine. N6-acetyllysine is present on K73. The helical transmembrane segment at 83–101 (GLSAGLLRQATYTTTRLGI) threads the bilayer. Y102 is subject to Phosphotyrosine. The next 3 helical transmembrane spans lie at 119–140 (FLLK…GPPA), 183–202 (GCIP…LASY), and 222–240 (HFCA…SMPV). K256 carries the N6-acetyllysine modification. The chain crosses the membrane as a helical span at residues 281-300 (GFTPYYARLGPHTVLTFIFL).

It belongs to the mitochondrial carrier (TC 2.A.29) family. In terms of assembly, interacts with SMIM26. Expressed in liver, heart and brain.

Its subcellular location is the mitochondrion inner membrane. It carries out the reaction (S)-malate(in) + 2-oxoglutarate(out) = (S)-malate(out) + 2-oxoglutarate(in). The catalysed reaction is malonate(in) + 2-oxoglutarate(out) = malonate(out) + 2-oxoglutarate(in). It catalyses the reaction succinate(in) + 2-oxoglutarate(out) = succinate(out) + 2-oxoglutarate(in). The enzyme catalyses maleate(in) + 2-oxoglutarate(out) = maleate(out) + 2-oxoglutarate(in). It carries out the reaction oxaloacetate(in) + 2-oxoglutarate(out) = oxaloacetate(out) + 2-oxoglutarate(in). In terms of biological role, catalyzes the transport of 2-oxoglutarate (alpha-oxoglutarate) across the inner mitochondrial membrane in an electroneutral exchange for malate. Can also exchange 2-oxoglutarate for other dicarboxylic acids such as malonate, succinate, maleate and oxaloacetate, although with lower affinity. Contributes to several metabolic processes, including the malate-aspartate shuttle, the oxoglutarate/isocitrate shuttle, in gluconeogenesis from lactate, and in nitrogen metabolism. Maintains mitochondrial fusion and fission events, and the organization and morphology of cristae. Involved in the regulation of apoptosis. Helps protect from cytotoxic-induced apoptosis by modulating glutathione levels in mitochondria. In Rattus norvegicus (Rat), this protein is Mitochondrial 2-oxoglutarate/malate carrier protein (Slc25a11).